Reading from the N-terminus, the 176-residue chain is Flavodoxin 1 (176 aa).

Residues 4–165 (HGIFFGSDTG…RVEKWVKQIS (162 aa)) form the Flavodoxin-like domain.

It belongs to the flavodoxin family. FMN is required as a cofactor.

Low-potential electron donor to a number of redox enzymes. The protein is Flavodoxin 1 (fldA) of Shigella flexneri.